The primary structure comprises 51 residues: 2,3,4,5-tetrahydropyridine-2,6-dicarboxylate N-succinyltransferase (51 aa).

The protein belongs to the transferase hexapeptide repeat family. In terms of assembly, homotrimer.

Its subcellular location is the cytoplasm. The enzyme catalyses (S)-2,3,4,5-tetrahydrodipicolinate + succinyl-CoA + H2O = (S)-2-succinylamino-6-oxoheptanedioate + CoA. It functions in the pathway amino-acid biosynthesis; L-lysine biosynthesis via DAP pathway; LL-2,6-diaminopimelate from (S)-tetrahydrodipicolinate (succinylase route): step 1/3. This Klebsiella oxytoca protein is 2,3,4,5-tetrahydropyridine-2,6-dicarboxylate N-succinyltransferase (dapD).